We begin with the raw amino-acid sequence, 64 residues long: uncharacterized protein (64 aa).

The chain crosses the membrane as a helical span at residues 41 to 61 (VFLALKVLGIMVLFYLLDAII).

The protein resides in the membrane. This is an uncharacterized protein from Acheta domesticus (House cricket).